A 266-amino-acid polypeptide reads, in one-letter code: 3-oxoadipate enol-lactonase 1 (266 aa).

The AB hydrolase-1 domain maps to 28–250 (PAIVFSNSLG…DASHLSNIEQ (223 aa)).

The catalysed reaction is (4,5-dihydro-5-oxofuran-2-yl)-acetate + H2O = 3-oxoadipate + H(+). It functions in the pathway aromatic compound metabolism; beta-ketoadipate pathway; 3-oxoadipate from 5-oxo-4,5-dihydro-2-furylacetate: step 1/1. This is 3-oxoadipate enol-lactonase 1 (pcaD) from Acinetobacter baylyi (strain ATCC 33305 / BD413 / ADP1).